The chain runs to 568 residues: Proline--tRNA ligase (568 aa).

This sequence belongs to the class-II aminoacyl-tRNA synthetase family. ProS type 1 subfamily. Homodimer.

It localises to the cytoplasm. It catalyses the reaction tRNA(Pro) + L-proline + ATP = L-prolyl-tRNA(Pro) + AMP + diphosphate. Catalyzes the attachment of proline to tRNA(Pro) in a two-step reaction: proline is first activated by ATP to form Pro-AMP and then transferred to the acceptor end of tRNA(Pro). As ProRS can inadvertently accommodate and process non-cognate amino acids such as alanine and cysteine, to avoid such errors it has two additional distinct editing activities against alanine. One activity is designated as 'pretransfer' editing and involves the tRNA(Pro)-independent hydrolysis of activated Ala-AMP. The other activity is designated 'posttransfer' editing and involves deacylation of mischarged Ala-tRNA(Pro). The misacylated Cys-tRNA(Pro) is not edited by ProRS. This is Proline--tRNA ligase from Nitrosomonas eutropha (strain DSM 101675 / C91 / Nm57).